The sequence spans 153 residues: Ribosomal RNA large subunit methyltransferase H (153 aa).

Residues L70, G102, and 121 to 126 (FSKMTF) each bind S-adenosyl-L-methionine.

This sequence belongs to the RNA methyltransferase RlmH family. In terms of assembly, homodimer.

It localises to the cytoplasm. It catalyses the reaction pseudouridine(1915) in 23S rRNA + S-adenosyl-L-methionine = N(3)-methylpseudouridine(1915) in 23S rRNA + S-adenosyl-L-homocysteine + H(+). Functionally, specifically methylates the pseudouridine at position 1915 (m3Psi1915) in 23S rRNA. This chain is Ribosomal RNA large subunit methyltransferase H, found in Desulfotalea psychrophila (strain LSv54 / DSM 12343).